The sequence spans 221 residues: Small ribosomal subunit protein uS3 (221 aa).

One can recognise a KH type-2 domain in the interval 39 to 108 (IRKFVKKELF…NILINIVEVK (70 aa)).

This sequence belongs to the universal ribosomal protein uS3 family. Part of the 30S ribosomal subunit. Forms a tight complex with proteins S10 and S14.

Functionally, binds the lower part of the 30S subunit head. Binds mRNA in the 70S ribosome, positioning it for translation. The sequence is that of Small ribosomal subunit protein uS3 from Clostridium botulinum (strain Alaska E43 / Type E3).